The sequence spans 172 residues: 3-hydroxydecanoyl-[acyl-carrier-protein] dehydratase (172 aa).

The active site involves His71.

This sequence belongs to the thioester dehydratase family. FabA subfamily. As to quaternary structure, homodimer.

It is found in the cytoplasm. It carries out the reaction a (3R)-hydroxyacyl-[ACP] = a (2E)-enoyl-[ACP] + H2O. It catalyses the reaction (3R)-hydroxydecanoyl-[ACP] = (2E)-decenoyl-[ACP] + H2O. The catalysed reaction is (2E)-decenoyl-[ACP] = (3Z)-decenoyl-[ACP]. Its pathway is lipid metabolism; fatty acid biosynthesis. In terms of biological role, necessary for the introduction of cis unsaturation into fatty acids. Catalyzes the dehydration of (3R)-3-hydroxydecanoyl-ACP to E-(2)-decenoyl-ACP and then its isomerization to Z-(3)-decenoyl-ACP. Can catalyze the dehydratase reaction for beta-hydroxyacyl-ACPs with saturated chain lengths up to 16:0, being most active on intermediate chain length. The sequence is that of 3-hydroxydecanoyl-[acyl-carrier-protein] dehydratase from Photorhabdus laumondii subsp. laumondii (strain DSM 15139 / CIP 105565 / TT01) (Photorhabdus luminescens subsp. laumondii).